We begin with the raw amino-acid sequence, 2224 residues long: Myomegalin (2224 aa).

Coiled coils occupy residues 41–97 (REDV…RQQE), 162–205 (DQYS…LLEE), 236–318 (VSES…REML), and 350–682 (CSQL…ALRQ). A disordered region spans residues 206 to 236 (PASMEVQPVPKGLPTQQKPDLHETPTTQPPV). Polar residues predominate over residues 219 to 236 (PTQQKPDLHETPTTQPPV). The tract at residues 703–751 (GVTSIGPHHGEQTDQGSMQMPSRDDSTSLTAREEASIPRSTLGDSDTVA) is disordered. The residue at position 705 (threonine 705) is a Phosphothreonine. Basic and acidic residues predominate over residues 724–738 (SRDDSTSLTAREEAS). 3 coiled-coil regions span residues 745–822 (GDSD…QLVD), 856–886 (NKRQ…RQLY), and 949–986 (AQEM…AGFS). Disordered regions lie at residues 1098–1128 (TGLP…SLPL), 1141–1161 (NKSQ…GSTK), and 1270–1298 (VSPP…DDSS). Residues 1112–1124 (ENTTTARPGSRPQ) show a composition bias toward polar residues. Coiled-coil stretches lie at residues 1159–1187 (STKH…SEAT), 1295–1331 (DDSS…LSAT), and 1377–1401 (GLQA…LPKT). Positions 1276-1298 (KPLENKPGKQEEFRAHGTPDDSS) are enriched in basic and acidic residues. One can recognise an Olduvai domain in the interval 1497-1588 (KDHKSEKEEA…DEKKPSPSHS (92 aa)). Disordered regions lie at residues 1576–1637 (THYD…SLSQ), 1736–1757 (SSGQ…LSSG), 1805–1824 (LSST…QGLE), and 1962–2001 (KASL…LNSP). Over residues 1599–1609 (ESSSSPISLPT) the composition is skewed to polar residues. Residues 1748 to 1757 (GSVSGELSSG) show a composition bias toward low complexity. Residues 1769-1958 (GADLLEEHLG…RLQLEQQMDR (190 aa)) adopt a coiled-coil conformation. Residues 2148-2191 (KEGQLMEKELLDLRAQVSQQEQILQNTAARLKRANQRKKSMEQF) are a coiled coil.

As to quaternary structure, interacts with PDE4D. Isoform 2 interacts with MAPRE1 and MAPRE3. Isoform 2 forms a pericentrosomal complex with AKAP9, CDK5RAP2 and EB1/MAPRE1; within this complex, may mediate MAPRE1-binding to CDK5RAP2. Interaction with AKAP9 stabilizes both proteins. Isoform 2 interacts (via N-terminus) with CAMSAP2; this interaction is much stronger in the presence of AKAP9. In complex with AKAP9, Isoform 2 recruits CAMSAP2 to the Golgi apparatus. Isoform 2 interacts with unglycosylated LGALS3BP; this interaction may connect the pericentrosomal complex to the gamma-tubulin ring complex (gamma-TuRC) to promote microtubule assembly and acetylation.

The protein resides in the cytoplasm. It localises to the cytoskeleton. It is found in the microtubule organizing center. Its subcellular location is the centrosome. The protein localises to the golgi apparatus. Functionally, functions as an anchor sequestering components of the cAMP-dependent pathway to Golgi and/or centrosomes. In terms of biological role, participates in microtubule dynamics, promoting microtubule assembly. Depending upon the cell context, may act at the level of the Golgi apparatus or that of the centrosome. In complex with AKAP9, recruits CAMSAP2 to the Golgi apparatus and tethers non-centrosomal minus-end microtubules to the Golgi, an important step for polarized cell movement. In complex with AKAP9, EB1/MAPRE1 and CDK5RAP2, contributes to microtubules nucleation and extension from the centrosome to the cell periphery, a crucial process for directed cell migration, mitotic spindle orientation and cell-cycle progression. This Mus musculus (Mouse) protein is Myomegalin (Pde4dip).